We begin with the raw amino-acid sequence, 279 residues long: Thymidylate synthase (279 aa).

A dUMP-binding site is contributed by 132–133 (RR). The active-site Nucleophile is the cysteine 153. Residues 178–181 (RSND), asparagine 189, and 219–221 (HIY) each bind dUMP. Aspartate 181 is a binding site for (6R)-5,10-methylene-5,6,7,8-tetrahydrofolate. A (6R)-5,10-methylene-5,6,7,8-tetrahydrofolate-binding site is contributed by alanine 278.

Belongs to the thymidylate synthase family. Bacterial-type ThyA subfamily. Homodimer.

It is found in the cytoplasm. The enzyme catalyses dUMP + (6R)-5,10-methylene-5,6,7,8-tetrahydrofolate = 7,8-dihydrofolate + dTMP. It functions in the pathway pyrimidine metabolism; dTTP biosynthesis. Catalyzes the reductive methylation of 2'-deoxyuridine-5'-monophosphate (dUMP) to 2'-deoxythymidine-5'-monophosphate (dTMP) while utilizing 5,10-methylenetetrahydrofolate (mTHF) as the methyl donor and reductant in the reaction, yielding dihydrofolate (DHF) as a by-product. This enzymatic reaction provides an intracellular de novo source of dTMP, an essential precursor for DNA biosynthesis. This is Thymidylate synthase from Lactococcus lactis subsp. lactis (strain IL1403) (Streptococcus lactis).